The sequence spans 181 residues: Large ribosomal subunit protein uL5 (181 aa).

It belongs to the universal ribosomal protein uL5 family. Part of the 50S ribosomal subunit; contacts the 5S rRNA and probably tRNA. Forms a bridge to the 30S subunit in the 70S ribosome.

Functionally, this is one of the proteins that bind and probably mediate the attachment of the 5S RNA into the large ribosomal subunit, where it forms part of the central protuberance. In the 70S ribosome it contacts protein S13 of the 30S subunit (bridge B1b), connecting the 2 subunits; this bridge is implicated in subunit movement. May contact the P site tRNA; the 5S rRNA and some of its associated proteins might help stabilize positioning of ribosome-bound tRNAs. This Methanococcus aeolicus (strain ATCC BAA-1280 / DSM 17508 / OCM 812 / Nankai-3) protein is Large ribosomal subunit protein uL5.